The sequence spans 168 residues: UPF0303 protein YE1367 (168 aa).

Belongs to the UPF0303 family.

The sequence is that of UPF0303 protein YE1367 from Yersinia enterocolitica serotype O:8 / biotype 1B (strain NCTC 13174 / 8081).